An 86-amino-acid polypeptide reads, in one-letter code: Long neurotoxin homolog (86 aa).

A signal peptide spans 1-21 (MKTLLLTLVVVTIVCLALGYT). 5 cysteine pairs are disulfide-bonded: C24–C45, C27–C32, C38–C63, C67–C78, and C79–C84.

This sequence belongs to the three-finger toxin family. Ancestral subfamily. Orphan group II sub-subfamily. In terms of tissue distribution, expressed by the venom gland.

The protein localises to the secreted. Functionally, binds with low affinity and weakly inhibits muscle nicotinic acetylcholine receptor (nAChR). In Naja atra (Chinese cobra), this protein is Long neurotoxin homolog.